Reading from the N-terminus, the 80-residue chain is Large ribosomal subunit protein uL30 (80 aa).

This sequence belongs to the universal ribosomal protein uL30 family. In terms of assembly, part of the 50S ribosomal subunit.

The protein is Large ribosomal subunit protein uL30 of Vesicomyosocius okutanii subsp. Calyptogena okutanii (strain HA).